The chain runs to 73 residues: Nodulin-1 (73 aa).

Positions 1–23 are cleaved as a signal peptide; that stretch reads MERKTLASLCFFLIVLLAAQVVA. 3 disulfides stabilise this stretch: Cys-39–Cys-64, Cys-49–Cys-71, and Cys-53–Cys-73.

Expressed in nodules, but not in leaves, stems, flowers and roots. In developing nodules, expressed close to the infection threads.

The protein localises to the secreted. In terms of biological role, nodulation-related protein probably involved in the infection process. The protein is Nodulin-1 (N1) of Medicago truncatula (Barrel medic).